Consider the following 198-residue polypeptide: Ribonuclease HII (198 aa).

The RNase H type-2 domain occupies 10–198 (QLVAGVDEVG…PVKRALGLAS (189 aa)). 3 residues coordinate a divalent metal cation: aspartate 16, glutamate 17, and aspartate 108.

The protein belongs to the RNase HII family. It depends on Mn(2+) as a cofactor. The cofactor is Mg(2+).

It localises to the cytoplasm. The enzyme catalyses Endonucleolytic cleavage to 5'-phosphomonoester.. Functionally, endonuclease that specifically degrades the RNA of RNA-DNA hybrids. The sequence is that of Ribonuclease HII from Escherichia coli O45:K1 (strain S88 / ExPEC).